Reading from the N-terminus, the 805-residue chain is Kinesin-like protein Klp10A (805 aa).

Positions 1-274 (MDMITVGQSV…FVPLLDGQAV (274 aa)) are globular. Disordered regions lie at residues 68–94 (QHAA…SAIG) and 117–211 (IPNP…RRSH). The segment covering 80–94 (APMNLSRNPTQSAIG) has biased composition (polar residues). The segment covering 123–136 (SSNSVNTNSNSNTT) has biased composition (low complexity). A Phosphoserine modification is found at S157. Over residues 158-179 (QAATGQQQTRIASAVPNNTLPN) the composition is skewed to polar residues. Over residues 180–200 (PSAAASAGPAAQGVATAATTQ) the composition is skewed to low complexity. Residues 205 to 244 (ASTRRSHALKEVERLKENREKRRARQAEMKEEKVALMNQD) are a coiled coil. The region spanning 278-610 (QITVCVRKRP…LRYADRVKEL (333 aa)) is the Kinesin motor domain. 368–375 (GQTGSGKT) provides a ligand contact to ATP. Position 630 is a phosphothreonine (T630). Residues 633–688 (EEEEELNMVHPHSHQLHPNSHAPASQSNNQRAPASHHSGAVIHNNNNNNNKNGNAG) form a disordered region. Polar residues predominate over residues 648 to 664 (LHPNSHAPASQSNNQRA). The segment covering 676 to 688 (NNNNNNNKNGNAG) has biased composition (low complexity). Residues S795, S797, and S800 each carry the phosphoserine modification.

This sequence belongs to the TRAFAC class myosin-kinesin ATPase superfamily. Kinesin family. MCAK/KIF2 subfamily. As to quaternary structure, interacts with Alms1a (via C-terminus). Expressed in male germline stem cells and spermatogonia (at protein level).

The protein resides in the cytoplasm. The protein localises to the cytoskeleton. It localises to the microtubule organizing center. Its subcellular location is the centrosome. It is found in the spindle pole. The protein resides in the chromosome. The protein localises to the centromere. Required during anaphase to drive sister chromatid separation to promote flux by actively depolymerizing kinetochore microtubules at their pole-associated minus ends, thereby moving chromatids through a 'poleward flux'. Involved in asymmetric cell division of sensory organ precursor (SOP) cells by playing a role in the asymmetric localization of Sara-expressing endosomes to the pIIa daughter cell but not to the pIIb cell. Klp98A targets Sara-expressing endosomes to the central spindle which is symmetrically arranged in early cell division. During late cytokinesis, central spindle asymmetry is generated by enrichment of Patronin on the pIIb side which protects microtubules from depolymerization by Klp10A while unprotected microtubules on the pIIa side are disassembled by Klp10A, leading to the asymmetric delivery of Sara-expressing endosomes to the pIIa daughter cell. This is Kinesin-like protein Klp10A from Drosophila melanogaster (Fruit fly).